We begin with the raw amino-acid sequence, 62 residues long: LTCVTGKSIGGISTEECAAGQKRCNKKWTKMGPKLYDVSRGCAATCPTADEYGCVKCCNTDK.

Intrachain disulfides connect Cys3–Cys24, Cys17–Cys42, and Cys46–Cys57.

Belongs to the three-finger toxin family. Short-chain subfamily. Aminergic toxin sub-subfamily. Heterodimer of C8S2 chain 1 (AC P01410) and chain 2; disulfide-linked. As to expression, expressed by the venom gland.

The protein localises to the secreted. Its function is as follows. This protein shows a synergetic toxic effect in that it enhances the toxicity of other toxins. This chain is Synergistic-type venom protein C8S2, chain 2, found in Dendroaspis angusticeps (Eastern green mamba).